A 431-amino-acid polypeptide reads, in one-letter code: Sorting nexin-31 (431 aa).

The 107-residue stretch at 1–107 (MHICIPVTEE…DYFRKLQMDT (107 aa)) folds into the PX domain.

This sequence belongs to the sorting nexin family.

May be involved in protein trafficking. The sequence is that of Sorting nexin-31 (snx31) from Xenopus laevis (African clawed frog).